Reading from the N-terminus, the 221-residue chain is PKHD-type hydroxylase PMT9312_1262 (221 aa).

One can recognise a Fe2OG dioxygenase domain in the interval 80–174; sequence IIHGIMFTKS…RLVCVGWIES (95 aa). His98, Asp100, and His155 together coordinate Fe cation. Arg165 is a binding site for 2-oxoglutarate.

The cofactor is Fe(2+). It depends on L-ascorbate as a cofactor.

In Prochlorococcus marinus (strain MIT 9312), this protein is PKHD-type hydroxylase PMT9312_1262.